Here is a 292-residue protein sequence, read N- to C-terminus: High-affinity heme uptake system protein IsdE (292 aa).

The signal sequence occupies residues 1-19 (MRIIKYLTILVISVVILTS). Cys20 is lipidated: N-palmitoyl cysteine. Cys20 carries S-diacylglycerol cysteine lipidation. Residues 35-291 (RIVPTTVALT…QLYDLFYKDK (257 aa)) form the Fe/B12 periplasmic-binding domain. Heme is bound by residues Val41, Ala42, Ser60, Tyr61, Met78, and His229.

The protein belongs to the bacterial solute-binding protein 8 family. Requires heme b as cofactor.

It localises to the cell membrane. Involved in heme (porphyrin) scavenging. Binds Fe(2+) and Fe(3+) heme but the largest fraction is Fe(2+) heme. Functions as a high-affinity heme binding protein and probably has a role in relaying heme-iron from cell wall-anchored isd proteins receptors to the probable permease IsdF. The protein is High-affinity heme uptake system protein IsdE (isdE) of Staphylococcus aureus (strain MRSA252).